The primary structure comprises 1138 residues: Eukaryotic translation initiation factor 3 subunit A (1138 aa).

Residues 319 to 502 (LQRMAAHVLL…NSIYFGTDLT (184 aa)) form the PCI domain. 2 disordered regions span residues 590–633 (NNAR…NEIQ) and 817–1138 (ERFR…VKRR). Basic and acidic residues-rich tracts occupy residues 817 to 903 (ERFR…RVER), 923 to 967 (DRNE…KEND), 1003 to 1049 (GRDD…DQPQ), and 1058 to 1078 (DSPR…RDVR). Positions 1082-1100 (PKEGGGGVSGGGAGGGGGN) are enriched in gly residues. The span at 1107 to 1128 (PREEKAPPKREQAQDKENKAGD) shows a compositional bias: basic and acidic residues.

It belongs to the eIF-3 subunit A family. Component of the eukaryotic translation initiation factor 3 (eIF-3) complex. The eIF-3 complex interacts with pix.

The protein localises to the cytoplasm. RNA-binding component of the eukaryotic translation initiation factor 3 (eIF-3) complex, which is involved in protein synthesis of a specialized repertoire of mRNAs and, together with other initiation factors, stimulates binding of mRNA and methionyl-tRNAi to the 40S ribosome. The eIF-3 complex specifically targets and initiates translation of a subset of mRNAs involved in cell proliferation. The sequence is that of Eukaryotic translation initiation factor 3 subunit A from Drosophila virilis (Fruit fly).